Here is a 481-residue protein sequence, read N- to C-terminus: Glycogen synthase (481 aa).

Residue Lys16 participates in ADP-alpha-D-glucose binding.

Belongs to the glycosyltransferase 1 family. Bacterial/plant glycogen synthase subfamily.

It catalyses the reaction [(1-&gt;4)-alpha-D-glucosyl](n) + ADP-alpha-D-glucose = [(1-&gt;4)-alpha-D-glucosyl](n+1) + ADP + H(+). Its pathway is glycan biosynthesis; glycogen biosynthesis. In terms of biological role, synthesizes alpha-1,4-glucan chains using ADP-glucose. The chain is Glycogen synthase from Cellvibrio japonicus (strain Ueda107) (Pseudomonas fluorescens subsp. cellulosa).